The sequence spans 189 residues: uncharacterized protein (189 aa).

4 helical membrane-spanning segments follow: residues 49–69 (LLGI…LFVF), 78–98 (LFHK…LSLF), 102–122 (LTIV…FPMI), and 124–144 (VSIA…LFPA). The tract at residues 165–189 (SSSAPDLNYPSLPTQSASPSQRFSA) is disordered.

The protein belongs to the chlamydial CPn_0442/CT_006/TC_0274 family.

The protein resides in the cell membrane. This is an uncharacterized protein from Chlamydia trachomatis serovar D (strain ATCC VR-885 / DSM 19411 / UW-3/Cx).